Reading from the N-terminus, the 581-residue chain is 2-hydroxyacyl-CoA lyase 1 (581 aa).

Phosphoserine occurs at positions 4 and 6. Glutamate 63 contacts thiamine diphosphate. 3 positions are modified to N6-succinyllysine: lysine 354, lysine 361, and lysine 368. Residues 404–487 are thiamine pyrophosphate binding; it reads TMDIGRTMLQ…IILLVVNNNG (84 aa). Positions 458 and 485 each coordinate Mg(2+). The Microbody targeting signal signature appears at 579 to 581; that stretch reads SNM.

This sequence belongs to the TPP enzyme family. As to quaternary structure, homotetramer. Mg(2+) serves as cofactor. Thiamine diphosphate is required as a cofactor. In terms of tissue distribution, predominanly expressed in liver.

Its subcellular location is the peroxisome. The catalysed reaction is a 2-hydroxy-3-methyl fatty acyl-CoA = a 2-methyl-branched fatty aldehyde + formyl-CoA. The enzyme catalyses an (R)-2-hydroxy-long-chain-fatty acyl-CoA = a long-chain fatty aldehyde + formyl-CoA. It carries out the reaction 2-hydroxy-3-methylhexadecanoyl-CoA = 2-methylpentadecanal + formyl-CoA. It catalyses the reaction 2-hydroxyoctadecanoyl-CoA = heptadecanal + formyl-CoA. The catalysed reaction is 2-hydroxyphytanoyl-CoA = 2,6,10,14-tetramethylpentadecanal + formyl-CoA. It functions in the pathway lipid metabolism; fatty acid metabolism. Peroxisomal 2-OH acyl-CoA lyase involved in the cleavage (C1 removal) reaction in the fatty acid alpha-oxydation in a thiamine pyrophosphate (TPP)-dependent manner. Involved in the degradation of 3-methyl-branched fatty acids like phytanic acid and the shortening of 2-hydroxy long-chain fatty acids. Plays a significant role in the biosynthesis of heptadecanal in the liver. This chain is 2-hydroxyacyl-CoA lyase 1 (Hacl1), found in Mus musculus (Mouse).